A 142-amino-acid chain; its full sequence is Two-component response regulator ARR22 (142 aa).

The Response regulatory domain maps to 23–140; that stretch reads NVLIVDDDPL…KIFPLISHLF (118 aa). The residue at position 74 (D74) is a 4-aspartylphosphate.

It belongs to the ARR family. Type-A subfamily. Two-component system major event consists of a His-to-Asp phosphorelay between a sensor histidine kinase (HK) and a response regulator (RR). In plants, the His-to-Asp phosphorelay involves an additional intermediate named Histidine-containing phosphotransfer protein (HPt). This multistep phosphorelay consists of a His-Asp-His-Asp sequential transfer of a phosphate group between first a His and an Asp of the HK protein, followed by the transfer to a conserved His of the HPt protein and finally the transfer to an Asp in the receiver domain of the RR protein.

The protein localises to the nucleus. In terms of biological role, functions as a response regulator involved in His-to-Asp phosphorelay signal transduction system. Phosphorylation of the Asp residue in the receiver domain activates the ability of the protein to promote the transcription of target genes. Type-A response regulators seem to act as negative regulators of the cytokinin signaling. The protein is Two-component response regulator ARR22 (ARR22) of Arabidopsis thaliana (Mouse-ear cress).